The following is a 358-amino-acid chain: Probable tartrate dehydrogenase/decarboxylase TtuC' (358 aa).

3 residues coordinate Mn(2+): aspartate 222, aspartate 246, and aspartate 250.

This sequence belongs to the isocitrate and isopropylmalate dehydrogenases family. It depends on Mg(2+) as a cofactor. Requires Mn(2+) as cofactor. The cofactor is K(+).

It localises to the cytoplasm. It catalyses the reaction tartrate + NAD(+) = 2-hydroxy-3-oxosuccinate + NADH + H(+). The catalysed reaction is (2R,3S)-tartrate + NAD(+) = 2-hydroxy-3-oxosuccinate + NADH + H(+). It carries out the reaction (2R,3R)-tartrate + NAD(+) = 2-hydroxy-3-oxosuccinate + NADH + H(+). The enzyme catalyses (2R,3R)-tartrate + H(+) = (R)-glycerate + CO2. It catalyses the reaction (R)-malate + NAD(+) = pyruvate + CO2 + NADH. It participates in carbohydrate acid metabolism; tartrate degradation; 2-hydroxy-3-oxosuccinate from L-tartrate: step 1/1. The protein operates within carbohydrate acid metabolism; tartrate degradation; 2-hydroxy-3-oxosuccinate from meso-tartrate: step 1/1. It functions in the pathway carbohydrate acid metabolism; tartrate degradation; D-glycerate from L-tartrate: step 1/1. Its function is as follows. Has multiple catalytic activities. Apart from catalyzing the oxidation of (+)-tartrate to oxaloglycolate, also converts meso-tartrate to D-glycerate and catalyzes the oxidative decarboxylation of D-malate to pyruvate. This chain is Probable tartrate dehydrogenase/decarboxylase TtuC' (ttuC'), found in Agrobacterium vitis (Rhizobium vitis).